Consider the following 336-residue polypeptide: Transcription initiation factor IIB (336 aa).

Residues 41-72 (QKLRCPICGNTVFIEDAERGQIVCASCGYVLM) form a TFIIB-type zinc finger. Residues cysteine 45, cysteine 48, cysteine 64, and cysteine 67 each contribute to the Zn(2+) site. 2 consecutive repeat copies span residues 152–235 (HELN…AREL) and 246–327 (QYVP…ELAK).

This sequence belongs to the TFIIB family.

Stabilizes TBP binding to an archaeal box-A promoter. Also responsible for recruiting RNA polymerase II to the pre-initiation complex (DNA-TBP-TFIIB). The sequence is that of Transcription initiation factor IIB from Caldivirga maquilingensis (strain ATCC 700844 / DSM 13496 / JCM 10307 / IC-167).